The chain runs to 239 residues: MINVLIIDDDAMVAELNRRYVAQIPGFQCCGTASTLEKAKEIIFNSDAPIDLILLDIYMQKENGLDLLPVLHNARCKSDVIVISSAADAATIKDSLHYGVVDYLIKPFQASRFEEALTGWRQKKMALEKHQYYDQAELDQLIHGSSSNEQDPRRLPKGLTPQTLRTLCQWIDAHQDYEFSTDELANEVNISRVSCRKYLIWLVNCHILFTSIHYGVTGRPVYRYRIQAEHYSLLKQYCQ.

Positions 3-121 (NVLIIDDDAM…RFEEALTGWR (119 aa)) constitute a Response regulatory domain. Asp56 carries the post-translational modification 4-aspartylphosphate. The segment at residues 181–200 (TDELANEVNISRVSCRKYLI) is a DNA-binding region (H-T-H motif).

Phosphorylated and activated by DcuS.

It is found in the cytoplasm. In terms of biological role, member of the two-component regulatory system DcuR/DcuS. Involved in the C4-dicarboxylate-stimulated regulation of the genes encoding the anaerobic fumarate respiratory system (frdABCD; nuoAN; dcuB; dcuC; sdhCDAB; etc.). Weakly regulates the aerobic C4-dicarboxylate transporter dctA. This Shigella flexneri protein is Transcriptional regulatory protein DcuR (dcuR).